We begin with the raw amino-acid sequence, 310 residues long: Mitochondrial thiamine pyrophosphate carrier 1 (310 aa).

The next 6 membrane-spanning stretches (helical) occupy residues 16 to 32, 88 to 104, 117 to 141, 173 to 197, 218 to 234, and 274 to 291; these read VSPY…GGVA, ILYV…YSAL, IVMP…LTTY, GISG…LMFW, ICGF…TFPL, and GYGV…ISLW. Solcar repeat units lie at residues 16–107, 120–205, and 211–299; these read VSPY…LSKS, PSSV…AREF, and HVPF…VISA.

The protein belongs to the mitochondrial carrier (TC 2.A.29) family.

The protein localises to the mitochondrion inner membrane. Mitochondrial transporter that mediates uptake of thiamine pyrophosphate (ThPP) into mitochondria. This Lodderomyces elongisporus (strain ATCC 11503 / CBS 2605 / JCM 1781 / NBRC 1676 / NRRL YB-4239) (Yeast) protein is Mitochondrial thiamine pyrophosphate carrier 1 (TPC1).